The sequence spans 704 residues: Elongation factor G (704 aa).

Residues 8-291 (DKVRNIGIMA…AVVDYLASPL (284 aa)) enclose the tr-type G domain. Residues 17–24 (AHIDAGKT), 90–94 (DTPGH), and 144–147 (NKMD) each bind GTP.

The protein belongs to the TRAFAC class translation factor GTPase superfamily. Classic translation factor GTPase family. EF-G/EF-2 subfamily.

The protein localises to the cytoplasm. Catalyzes the GTP-dependent ribosomal translocation step during translation elongation. During this step, the ribosome changes from the pre-translocational (PRE) to the post-translocational (POST) state as the newly formed A-site-bound peptidyl-tRNA and P-site-bound deacylated tRNA move to the P and E sites, respectively. Catalyzes the coordinated movement of the two tRNA molecules, the mRNA and conformational changes in the ribosome. The chain is Elongation factor G from Chlorobium luteolum (strain DSM 273 / BCRC 81028 / 2530) (Pelodictyon luteolum).